A 311-amino-acid polypeptide reads, in one-letter code: Small ribosomal subunit protein uS3 (311 aa).

Positions 17–86 (MDEYFAEQLN…NPQIDAQEVK (70 aa)) constitute a KH type-2 domain. Residues 190–267 (PDSYTTTEPS…EPQAEVAEDL (78 aa)) are disordered. Residues 194-204 (TTTEPSEPVTE) are compositionally biased toward low complexity. Positions 205-231 (PVEKPAEKPAAKPAEKPVEAPKKESAA) are enriched in basic and acidic residues. Over residues 232–247 (KPKTPAVAPEKPVETA) the composition is skewed to low complexity. Residues 248 to 267 (EVAEPEEAEEEPQAEVAEDL) are compositionally biased toward acidic residues.

Belongs to the universal ribosomal protein uS3 family. In terms of assembly, part of the 30S ribosomal subunit.

In terms of biological role, binds the lower part of the 30S subunit head. This chain is Small ribosomal subunit protein uS3, found in Methanosarcina barkeri (strain Fusaro / DSM 804).